A 352-amino-acid chain; its full sequence is Ribosome biogenesis protein BRX1 homolog (352 aa).

The disordered stretch occupies residues 1–47 (MAATKRKRRGDLEVQAKKPKKNRKDAGQPAKQADVAKEAEEEKDRIP). Residues 34–46 (DVAKEAEEEKDRI) show a composition bias toward basic and acidic residues. Residues 59–248 (ERILIFSSRG…LIKIFQGSFG (190 aa)) form the Brix domain. Residue Lys159 forms a Glycyl lysine isopeptide (Lys-Gly) (interchain with G-Cter in SUMO2) linkage. Ser260 carries the post-translational modification Phosphoserine. Lys275 is subject to N6-acetyllysine. The segment at 281–301 (QVKDVQKSRKKEPKTILPHDP) is disordered. Residues Lys313 and Lys321 each participate in a glycyl lysine isopeptide (Lys-Gly) (interchain with G-Cter in SUMO2) cross-link.

This sequence belongs to the BRX1 family.

It localises to the nucleus. Its subcellular location is the nucleolus. Its function is as follows. Required for biogenesis of the 60S ribosomal subunit. In Rattus norvegicus (Rat), this protein is Ribosome biogenesis protein BRX1 homolog (Brix1).